Reading from the N-terminus, the 536-residue chain is Multifunctional cytochrome P450 monooxygenase af510 (536 aa).

Residues 4–24 (ELSTLQLSCVAFVAFMAVLVF) form a helical membrane-spanning segment. 2 N-linked (GlcNAc...) asparagine glycosylation sites follow: Asn210 and Asn293. Cys448 is a binding site for heme.

The protein belongs to the cytochrome P450 family. It depends on heme as a cofactor.

The protein resides in the membrane. The enzyme catalyses (+)-exo-beta-bergamotene + 2 reduced [NADPH--hemoprotein reductase] + 3 O2 = 5-dehydro-6-demethoxyfumagillol + 2 oxidized [NADPH--hemoprotein reductase] + 3 H2O + 2 H(+). It participates in secondary metabolite biosynthesis; terpenoid biosynthesis. Functionally, multifunctional cytochrome P450 monooxygenase; part of the gene cluster that mediates the biosynthesis of fumagillin, a meroterpenoid that has numerous biological activities including irreversible inhibition of human type 2 methionine aminopeptidase (METAP2). Within the pathway, the multifunctional cytochrome P450 monooxygenase af510 acts as a 2,4,6-trichlorophenol monooxygenase that first performs the C-H hydroxylation at the bridgehead C5 position to yield 5R-hydroxyl-beta-trans-bergamotene. Subsequently, a four electron oxidation initiated at C-9 coupled to cleavage of the cyclobutane C5-C8 bond of the bicyclo[3.1.1] core yields the epoxyketone intermediate 5-keto-cordycol. An additional epoxidation reaction also catalyzed by af510 then furnishes the characteristic bisepoxide ketone 5-keto-demethoxyfumagillol. The pathway begins with the conversion of farnesyl pyrophosphate (FPP) to beta-trans-bergamotene by the membrane-bound beta-trans-bergamotene synthase af520. The multifunctional cytochrome P450 monooxygenase af510 then converts beta-trans-bergamotene into 5-keto-demethoxyfumagillol via several oxydation steps. 5-keto-demethoxyfumagillol is then subjected to successive C-6 hydroxylation and O-methylation by the dioxygenase af480 and O-methyltransferase af390-400, respectively, to yield 5-keto-fumagillol, which is then stereoselectively reduced by the keto-reductase af490 to 5R-hydroxy-seco-sesquiterpene. The next step is the polyketide transferase af380-catalyzed transfer of a dodecapentaenoyl group synthesized by the polyketide synthase af370 onto 5R-hydroxy-seco-sesquiterpene which leads to the production of prefumagillin. Finally, oxidative cleavage by the monooxygenase af470 converts prefumagillin to fumagillin. The protein is Multifunctional cytochrome P450 monooxygenase af510 of Aspergillus fumigatus (strain ATCC MYA-4609 / CBS 101355 / FGSC A1100 / Af293) (Neosartorya fumigata).